Reading from the N-terminus, the 1235-residue chain is DNA polymerase (1235 aa).

Residues 773–887 form the DOD-type homing endonuclease domain; sequence LLGYYISSGD…LILLLNSIGV (115 aa).

It belongs to the DNA polymerase type-B family. Post-translationally, this protein undergoes a protein self splicing that involves a post-translational excision of the intervening region (intein) followed by peptide ligation.

The enzyme catalyses DNA(n) + a 2'-deoxyribonucleoside 5'-triphosphate = DNA(n+1) + diphosphate. In Pyrococcus horikoshii (strain ATCC 700860 / DSM 12428 / JCM 9974 / NBRC 100139 / OT-3), this protein is DNA polymerase (pol).